We begin with the raw amino-acid sequence, 489 residues long: UBX domain-containing protein 7 (489 aa).

Position 2 is an N-acetylalanine (alanine 2). The UBA domain maps to 2–54 (AAHGGSAASSALKGLIQQFTTITGASESVGKHMLEACNNNLEMAVTMFLDGGG). The segment at 56–77 (AEEPSTSSASVSTVRPHTEEEV) is disordered. The segment covering 59–70 (PSTSSASVSTVR) has biased composition (polar residues). Lysine 84 is covalently cross-linked (Glycyl lysine isopeptide (Lys-Gly) (interchain with G-Cter in SUMO2)). Lysine 99 participates in a covalent cross-link: Glycyl lysine isopeptide (Lys-Gly) (interchain with G-Cter in ubiquitin). Residue lysine 134 forms a Glycyl lysine isopeptide (Lys-Gly) (interchain with G-Cter in SUMO2) linkage. Serine 278, serine 280, serine 285, and serine 288 each carry phosphoserine. Positions 285-304 (SEDSQLEAAIRASLQETHFD) constitute a UIM domain. Over residues 300–309 (ETHFDSTQTK) the composition is skewed to polar residues. The interval 300 to 384 (ETHFDSTQTK…PGTATNHQGL (85 aa)) is disordered. Position 306 is a phosphothreonine (threonine 306). Positions 352 to 366 (HKDLGHRKEENRRPL) are enriched in basic and acidic residues. In terms of domain architecture, UBX spans 408 to 485 (VNGPKAQLML…GLCPQETVFV (78 aa)).

Interacts with neddylated CUL2, ubiquitinated HIF1A, and VCP/p97.

Its subcellular location is the nucleus. Ubiquitin-binding adapter that links a subset of NEDD8-associated cullin ring ligases (CRLs) to the segregase VCP/p97, to regulate turnover of their ubiquitination substrates. This is UBX domain-containing protein 7 (UBXN7) from Homo sapiens (Human).